Consider the following 389-residue polypeptide: Acetylornithine aminotransferase (389 aa).

Pyridoxal 5'-phosphate-binding positions include Gly-96–Thr-97 and Phe-123. Arg-126 provides a ligand contact to N(2)-acetyl-L-ornithine. Position 207-210 (Asp-207–Gln-210) interacts with pyridoxal 5'-phosphate. Residue Lys-236 is modified to N6-(pyridoxal phosphate)lysine. A N(2)-acetyl-L-ornithine-binding site is contributed by Ser-264. Residue Thr-265 coordinates pyridoxal 5'-phosphate.

It belongs to the class-III pyridoxal-phosphate-dependent aminotransferase family. ArgD subfamily. Homodimer. Pyridoxal 5'-phosphate is required as a cofactor.

Its subcellular location is the cytoplasm. It carries out the reaction N(2)-acetyl-L-ornithine + 2-oxoglutarate = N-acetyl-L-glutamate 5-semialdehyde + L-glutamate. It participates in amino-acid biosynthesis; L-arginine biosynthesis; N(2)-acetyl-L-ornithine from L-glutamate: step 4/4. In Lactiplantibacillus plantarum (strain ATCC BAA-793 / NCIMB 8826 / WCFS1) (Lactobacillus plantarum), this protein is Acetylornithine aminotransferase.